Consider the following 119-residue polypeptide: uncharacterized protein (119 aa).

2 consecutive transmembrane segments (helical) span residues 52–72 and 88–108; these read IVLFVLGFLLLIPWIINVINI and VLFSLSIAIIVIFVIFFIFLI.

It is found in the membrane. This is an uncharacterized protein from Dictyostelium discoideum (Social amoeba).